A 265-amino-acid chain; its full sequence is Small ribosomal subunit protein uS2 (265 aa).

A disordered region spans residues 231-265 (VEEEYEDYEGAEDDYEYDETEYTDSVIPDDEEEAE).

It belongs to the universal ribosomal protein uS2 family.

In Trichormus variabilis (strain ATCC 29413 / PCC 7937) (Anabaena variabilis), this protein is Small ribosomal subunit protein uS2.